The sequence spans 90 residues: Small ribosomal subunit protein uS15 (90 aa).

Belongs to the universal ribosomal protein uS15 family. As to quaternary structure, part of the 30S ribosomal subunit. Forms a bridge to the 50S subunit in the 70S ribosome, contacting the 23S rRNA.

Functionally, one of the primary rRNA binding proteins, it binds directly to 16S rRNA where it helps nucleate assembly of the platform of the 30S subunit by binding and bridging several RNA helices of the 16S rRNA. Its function is as follows. Forms an intersubunit bridge (bridge B4) with the 23S rRNA of the 50S subunit in the ribosome. The sequence is that of Small ribosomal subunit protein uS15 from Wolbachia sp. subsp. Brugia malayi (strain TRS).